A 429-amino-acid polypeptide reads, in one-letter code: Glucose-6-phosphate isomerase (429 aa).

Glu282 (proton donor) is an active-site residue. Catalysis depends on residues His303 and Lys418.

Belongs to the GPI family.

The protein resides in the cytoplasm. It carries out the reaction alpha-D-glucose 6-phosphate = beta-D-fructose 6-phosphate. Its pathway is carbohydrate biosynthesis; gluconeogenesis. The protein operates within carbohydrate degradation; glycolysis; D-glyceraldehyde 3-phosphate and glycerone phosphate from D-glucose: step 2/4. In terms of biological role, catalyzes the reversible isomerization of glucose-6-phosphate to fructose-6-phosphate. In Mesomycoplasma hyopneumoniae (strain 232) (Mycoplasma hyopneumoniae), this protein is Glucose-6-phosphate isomerase.